The following is a 109-amino-acid chain: Nucleoid-associated protein Ldb1634 (109 aa).

Residues 18–40 form a disordered region; that stretch reads MMKQAKKLQEQMAQEQENITTQE.

The protein belongs to the YbaB/EbfC family. Homodimer.

Its subcellular location is the cytoplasm. It localises to the nucleoid. Binds to DNA and alters its conformation. May be involved in regulation of gene expression, nucleoid organization and DNA protection. In Lactobacillus delbrueckii subsp. bulgaricus (strain ATCC 11842 / DSM 20081 / BCRC 10696 / JCM 1002 / NBRC 13953 / NCIMB 11778 / NCTC 12712 / WDCM 00102 / Lb 14), this protein is Nucleoid-associated protein Ldb1634.